We begin with the raw amino-acid sequence, 211 residues long: Uridine kinase (211 aa).

Position 15–22 (15–22) interacts with ATP; it reads GGSGSGKT.

This sequence belongs to the uridine kinase family.

Its subcellular location is the cytoplasm. It catalyses the reaction uridine + ATP = UMP + ADP + H(+). The enzyme catalyses cytidine + ATP = CMP + ADP + H(+). Its pathway is pyrimidine metabolism; CTP biosynthesis via salvage pathway; CTP from cytidine: step 1/3. It functions in the pathway pyrimidine metabolism; UMP biosynthesis via salvage pathway; UMP from uridine: step 1/1. This is Uridine kinase from Lactobacillus helveticus (strain DPC 4571).